The following is a 441-amino-acid chain: Ribosomal protein uS12 methylthiotransferase RimO (441 aa).

The 111-residue stretch at 8 to 118 folds into the MTTase N-terminal domain; the sequence is PKIGFVSLGC…VLEHVHHYVP (111 aa). Residues Cys17, Cys53, Cys82, Cys150, Cys154, and Cys157 each coordinate [4Fe-4S] cluster. Residues 136-373 enclose the Radical SAM core domain; that stretch reads LTPRHYAYLK…MQLQQQISAE (238 aa). The 66-residue stretch at 376-441 folds into the TRAM domain; it reads QEKVGREILV…DEYDLWGSRV (66 aa).

It belongs to the methylthiotransferase family. RimO subfamily. The cofactor is [4Fe-4S] cluster.

The protein resides in the cytoplasm. The catalysed reaction is L-aspartate(89)-[ribosomal protein uS12]-hydrogen + (sulfur carrier)-SH + AH2 + 2 S-adenosyl-L-methionine = 3-methylsulfanyl-L-aspartate(89)-[ribosomal protein uS12]-hydrogen + (sulfur carrier)-H + 5'-deoxyadenosine + L-methionine + A + S-adenosyl-L-homocysteine + 2 H(+). Catalyzes the methylthiolation of an aspartic acid residue of ribosomal protein uS12. This chain is Ribosomal protein uS12 methylthiotransferase RimO, found in Escherichia coli (strain UTI89 / UPEC).